The following is a 3411-amino-acid chain: Genome polyprotein (3411 aa).

At Met-1 to Asp-104 the chain is on the cytoplasmic side. The interval Pro-38–Leu-72 is hydrophobic; homodimerization of capsid protein C. Positions Ser-102–Gly-121 are cleaved as a propeptide — ER anchor for the capsid protein C, removed in mature form by serine protease NS3. A helical membrane pass occupies residues Val-105–Val-125. The Extracellular portion of the chain corresponds to Arg-126–Arg-244. Residues Asn-134 and Asn-150 are each glycosylated (N-linked (GlcNAc...) asparagine; by host). Residues Trp-245–Ser-265 traverse the membrane as a helical segment. Residues Asn-266–Arg-270 lie on the Cytoplasmic side of the membrane. Residues Val-271–Ser-285 traverse the membrane as a helical segment. Topologically, residues Ala-286–Leu-730 are extracellular. 8 disulfides stabilise this stretch: Cys-288/Cys-315, Cys-345/Cys-401, Cys-345/Cys-406, Cys-359/Cys-390, Cys-377/Cys-401, Cys-377/Cys-406, Cys-467/Cys-568, and Cys-585/Cys-615. The tract at residues Asp-383–Gly-396 is fusion peptide. The chain crosses the membrane as a helical span at residues Phe-731–Ile-751. The Extracellular segment spans residues Asn-752–Thr-757. The helical transmembrane segment at Met-758–Ala-778 threads the bilayer. Residues Asp-779–Glu-1132 are Extracellular-facing. 6 disulfide bridges follow: Cys-782-Cys-793, Cys-833-Cys-921, Cys-957-Cys-1002, Cys-1058-Cys-1107, Cys-1069-Cys-1091, and Cys-1090-Cys-1094. Residues Asn-908 and Asn-986 are each glycosylated (N-linked (GlcNAc...) asparagine; by host). Residues Ile-1133–Lys-1153 traverse the membrane as a helical segment. At Arg-1154–Ala-1201 the chain is on the cytoplasmic side. Residues Met-1202–Leu-1222 form a helical membrane-spanning segment. The Lumenal segment spans residues Arg-1223 to Pro-1287. Residues Val-1288–Val-1308 traverse the membrane as a helical segment. The Cytoplasmic segment spans residues Leu-1309–Ser-1355. Residues Ile-1356–Phe-1376 form a helical membrane-spanning segment. Over Gln-1377–Glu-1378 the chain is Lumenal. Residues Met-1379–Ala-1399 form a helical membrane-spanning segment. The Cytoplasmic segment spans residues Gly-1400 to Leu-1456. Residues Leu-1407–Val-1446 are interacts with and activates NS3 protease. Residues Ala-1457–Phe-1477 constitute an intramembrane region (helical). Topologically, residues His-1478–Ala-2157 are cytoplasmic. Positions Ser-1485 to Leu-1665 constitute a Peptidase S7 domain. Residues His-1537, Asp-1561, and Ser-1622 each act as charge relay system; for serine protease NS3 activity in the active site. In terms of domain architecture, Helicase ATP-binding spans Pro-1669–Gln-1825. Residues Lys-1673–Met-1676 are important for RNA-binding. An ATP-binding site is contributed by Phe-1682–Thr-1689. Residues Asp-1773–His-1776 carry the DEAH box motif. Residues Glu-1820–Tyr-1997 enclose the Helicase C-terminal domain. The residue at position 1877 (Lys-1877) is an N6-acetyllysine; by host. A helical membrane pass occupies residues Met-2158 to Phe-2178. The Lumenal segment spans residues Met-2179–Arg-2186. Positions Met-2187–Lys-2207 form an intramembrane region, helical. The Lumenal portion of the chain corresponds to Pro-2208 to Thr-2209. A helical membrane pass occupies residues His-2210–Gly-2230. Over Gln-2231–Ala-2241 the chain is Cytoplasmic. The helical transmembrane segment at Tyr-2242 to Leu-2262 threads the bilayer. The Lumenal portion of the chain corresponds to Glu-2263–Gly-2293. The segment at residues Ala-2294–Ile-2314 is an intramembrane region (helical). Residues Lys-2315–Ile-2360 lie on the Lumenal side of the membrane. A helical membrane pass occupies residues Thr-2361–Pro-2381. At Gly-2382–Ala-2421 the chain is on the cytoplasmic side. The chain crosses the membrane as a helical span at residues Leu-2422–Met-2442. Residues Cys-2443–Thr-2445 are Lumenal-facing. The helical transmembrane segment at Pro-2446–Gly-2466 threads the bilayer. Over Asn-2467–Ile-3411 the chain is Cytoplasmic. The region spanning Gly-2507–Ser-2771 is the mRNA cap 0-1 NS5-type MT domain. Position 2562 (Ser-2562) interacts with S-adenosyl-L-methionine. At Ser-2562 the chain carries Phosphoserine. The For 2'-O-MTase activity role is filled by Lys-2567. Positions 2592, 2593, 2610, 2611, 2637, and 2638 each coordinate S-adenosyl-L-methionine. Asp-2652 (for 2'-O-MTase activity) is an active-site residue. Ile-2653 serves as a coordination point for S-adenosyl-L-methionine. Catalysis depends on for 2'-O-MTase activity residues Lys-2688 and Glu-2724. Tyr-2726 serves as a coordination point for S-adenosyl-L-methionine. Residues Arg-2878–Arg-2911 carry the Nuclear localization signal motif. Zn(2+) contacts are provided by Glu-2945, His-2949, Cys-2954, and Cys-2957. Residues Gly-3035–Ala-3187 form the RdRp catalytic domain. Positions 3222, 3238, and 3357 each coordinate Zn(2+).

The protein in the N-terminal section; belongs to the class I-like SAM-binding methyltransferase superfamily. mRNA cap 0-1 NS5-type methyltransferase family. Homodimer. Interacts (via N-terminus) with host EXOC1 (via C-terminus); this interaction results in EXOC1 degradation through the proteasome degradation pathway. In terms of assembly, forms heterodimers with envelope protein E in the endoplasmic reticulum and Golgi. As to quaternary structure, homodimer; in the endoplasmic reticulum and Golgi. Interacts with protein prM. Interacts with non-structural protein 1. Homodimer; Homohexamer when secreted. Interacts with envelope protein E. In terms of assembly, interacts (via N-terminus) with serine protease NS3. As to quaternary structure, forms a heterodimer with serine protease NS3. May form homooligomers. Forms a heterodimer with NS2B. Interacts with non-structural protein 2A (via N-terminus). Interacts with NS4B. Interacts with unphosphorylated RNA-directed RNA polymerase NS5; this interaction stimulates RNA-directed RNA polymerase NS5 guanylyltransferase activity. NS3 interacts with host PDCD6IP; this interaction contributes to virion release. In terms of assembly, interacts with serine protease NS3. As to quaternary structure, homodimer. Interacts with host STAT2; this interaction prevents the establishment of cellular antiviral state. Interacts with serine protease NS3. Interacts with host TRIM23; this interaction leads to NS5 ubiquitination. Post-translationally, specific enzymatic cleavages in vivo yield mature proteins. The nascent capsid protein C contains a C-terminal hydrophobic domain that act as a signal sequence for translocation of prM into the lumen of the ER. Mature capsid protein C is cleaved at a site upstream of this hydrophobic domain by NS3. prM is cleaved in post-Golgi vesicles by a host furin, releasing the mature small envelope protein M, and peptide pr. Non-structural protein 2A-alpha, a C-terminally truncated form of non-structural protein 2A, results from partial cleavage by NS3. Specific enzymatic cleavages in vivo yield mature proteins peptide 2K acts as a signal sequence and is removed from the N-terminus of NS4B by the host signal peptidase in the ER lumen. Signal cleavage at the 2K-4B site requires a prior NS3 protease-mediated cleavage at the 4A-2K site. In terms of processing, cleaved in post-Golgi vesicles by a host furin, releasing the mature small envelope protein M, and peptide pr. This cleavage is incomplete as up to 30% of viral particles still carry uncleaved prM. N-glycosylated. Post-translationally, N-glycosylated. The excreted form is glycosylated and this is required for efficient secretion of the protein from infected cells. In terms of processing, polyubiquitinated; ubiquitination is probably mediated by host TRIM23 and is prerequisite for NS5-STAT2 interaction. NS5 is not ISGylated or sumoylated. Acetylated by host KAT5. Acetylation modulates NS3 RNA-binding and unwinding activities and plays an important positive role for viral replication. Post-translationally, phosphorylated on serines residues. This phosphorylation may trigger NS5 nuclear localization.

It is found in the virion. It localises to the host nucleus. The protein resides in the host cytoplasm. The protein localises to the host perinuclear region. Its subcellular location is the secreted. It is found in the virion membrane. It localises to the host endoplasmic reticulum membrane. It carries out the reaction Selective hydrolysis of -Xaa-Xaa-|-Yaa- bonds in which each of the Xaa can be either Arg or Lys and Yaa can be either Ser or Ala.. The enzyme catalyses RNA(n) + a ribonucleoside 5'-triphosphate = RNA(n+1) + diphosphate. It catalyses the reaction a ribonucleoside 5'-triphosphate + H2O = a ribonucleoside 5'-diphosphate + phosphate + H(+). The catalysed reaction is ATP + H2O = ADP + phosphate + H(+). It carries out the reaction a 5'-end (5'-triphosphoguanosine)-ribonucleoside in mRNA + S-adenosyl-L-methionine = a 5'-end (N(7)-methyl 5'-triphosphoguanosine)-ribonucleoside in mRNA + S-adenosyl-L-homocysteine. The enzyme catalyses a 5'-end (N(7)-methyl 5'-triphosphoguanosine)-ribonucleoside in mRNA + S-adenosyl-L-methionine = a 5'-end (N(7)-methyl 5'-triphosphoguanosine)-(2'-O-methyl-ribonucleoside) in mRNA + S-adenosyl-L-homocysteine + H(+). In terms of biological role, plays a role in virus budding by binding to the cell membrane and gathering the viral RNA into a nucleocapsid that forms the core of a mature virus particle. During virus entry, may induce genome penetration into the host cytoplasm after hemifusion induced by the surface proteins. Can migrate to the cell nucleus where it modulates host functions. Its function is as follows. Inhibits RNA silencing by interfering with host Dicer. Functionally, prevents premature fusion activity of envelope proteins in trans-Golgi by binding to envelope protein E at pH6.0. After virion release in extracellular space, gets dissociated from E dimers. Acts as a chaperone for envelope protein E during intracellular virion assembly by masking and inactivating envelope protein E fusion peptide. prM is the only viral peptide matured by host furin in the trans-Golgi network probably to avoid catastrophic activation of the viral fusion activity in acidic Golgi compartment prior to virion release. prM-E cleavage is inefficient, and many virions are only partially matured. These uncleaved prM would play a role in immune evasion. In terms of biological role, may play a role in virus budding. Exerts cytotoxic effects by activating a mitochondrial apoptotic pathway through M ectodomain. May display a viroporin activity. Its function is as follows. Binds to host cell surface receptor and mediates fusion between viral and cellular membranes. Envelope protein is synthesized in the endoplasmic reticulum in the form of heterodimer with protein prM. They play a role in virion budding in the ER, and the newly formed immature particle is covered with 60 spikes composed of heterodimer between precursor prM and envelope protein E. The virion is transported to the Golgi apparatus where the low pH causes dissociation of PrM-E heterodimers and formation of E homodimers. prM-E cleavage is inefficient, and many virions are only partially matured. These uncleaved prM would play a role in immune evasion. Functionally, involved in immune evasion, pathogenesis and viral replication. Once cleaved off the polyprotein, is targeted to three destinations: the viral replication cycle, the plasma membrane and the extracellular compartment. Essential for viral replication. Required for formation of the replication complex and recruitment of other non-structural proteins to the ER-derived membrane structures. Excreted as a hexameric lipoparticle that plays a role against host immune response. Antagonizing the complement function. Binds to the host macrophages and dendritic cells. Inhibits signal transduction originating from Toll-like receptor 3 (TLR3). Component of the viral RNA replication complex that functions in virion assembly and antagonizes the host immune response. In terms of biological role, required cofactor for the serine protease function of NS3. May have membrane-destabilizing activity and form viroporins. Its function is as follows. Displays three enzymatic activities: serine protease, NTPase and RNA helicase. NS3 serine protease, in association with NS2B, performs its autocleavage and cleaves the polyprotein at dibasic sites in the cytoplasm: C-prM, NS2A-NS2B, NS2B-NS3, NS3-NS4A, NS4A-2K and NS4B-NS5. NS3 RNA helicase binds RNA and unwinds dsRNA in the 3' to 5' direction. Also plays a role in virus assembly. Functionally, regulates the ATPase activity of the NS3 helicase activity. NS4A allows NS3 helicase to conserve energy during unwinding. Functions as a signal peptide for NS4B and is required for the interferon antagonism activity of the latter. In terms of biological role, induces the formation of ER-derived membrane vesicles where the viral replication takes place. Inhibits interferon (IFN)-induced host STAT1 phosphorylation and nuclear translocation, thereby preventing the establishment of cellular antiviral state by blocking the IFN-alpha/beta pathway. Its function is as follows. Replicates the viral (+) and (-) RNA genome, and performs the capping of genomes in the cytoplasm. NS5 methylates viral RNA cap at guanine N-7 and ribose 2'-O positions. Besides its role in RNA genome replication, also prevents the establishment of cellular antiviral state by blocking the interferon-alpha/beta (IFN-alpha/beta) signaling pathway. IFN-I induces binding of NS5 to host IFN-activated transcription factor STAT2, preventing its transcriptional activity. Host TRIM23 is the E3 ligase that interacts with and polyubiquitinates NS5 to promote its binding to STAT2 and trigger IFN-I signaling inhibition. The sequence is that of Genome polyprotein from Aedes aegypti (Yellowfever mosquito).